The chain runs to 410 residues: Dipeptidase 1 (410 aa).

A signal peptide spans 1 to 16 (MVIIWWFWSLLAICAS). 2 residues coordinate Zn(2+): H36 and D38. C87 and C170 are oxidised to a cystine. A glycan (N-linked (GlcNAc...) asparagine) is linked at N121. Residue E141 coordinates Zn(2+). Residue H168 coordinates substrate. Zn(2+) is bound by residues H214 and H235. A disulfide bond links C242 and C274. R246 contributes to the substrate binding site. Residue N258 is glycosylated (N-linked (GlcNAc...) asparagine). D304 contacts substrate. A glycan (N-linked (GlcNAc...) asparagine) is linked at N332. Residue S384 is the site of GPI-anchor amidated serine attachment. Residues 385-410 (QAHSIHLQTGALVASLASLLFRLHLL) constitute a propeptide, removed in mature form.

This sequence belongs to the metallo-dependent hydrolases superfamily. Peptidase M19 family. Homodimer; disulfide-linked. The cofactor is Zn(2+). In terms of tissue distribution, expressed in heart, lung, skeletal muscle, kidney, liver, and testis. Not detected in brain and spleen.

It is found in the apical cell membrane. The protein localises to the cell projection. The protein resides in the microvillus membrane. The enzyme catalyses an L-aminoacyl-L-amino acid + H2O = 2 an L-alpha-amino acid. It catalyses the reaction leukotriene D4 + H2O = leukotriene E4 + glycine. The catalysed reaction is L-cystine-bis-glycine + 2 H2O = L-cystine + 2 glycine. It carries out the reaction a beta-lactam + H2O = a substituted beta-amino acid. The enzyme catalyses glycyldehydrophenylalanine + H2O = 2,3-didehydrophenylalanine + glycine. With respect to regulation, inhibited by L-penicillamine. Inhibited by cilastatin. In terms of biological role, hydrolyzes a wide range of dipeptides including the conversion of leukotriene D4 to leukotriene E4. Hydrolyzes cystinyl-bis-glycine (cys-bis-gly) formed during glutathione degradation. Also possesses beta lactamase activity and hydrolytically inactivates beta-lactam antibiotics. Functionally, independently of its dipeptidase activity, acts as an adhesion receptor for neutrophil recruitment from bloodstream into inflamed lungs and liver. The chain is Dipeptidase 1 (Dpep1) from Mus musculus (Mouse).